The primary structure comprises 165 residues: Deoxyuridine 5'-triphosphate nucleotidohydrolase (165 aa).

Substrate is bound by residues 66 to 68 (RSG), asparagine 79, 83 to 85 (TVD), and lysine 93. The tract at residues 134-165 (ETSRGAGGHGSSGGHASLTPGARSAARVAQEG) is disordered.

The protein belongs to the dUTPase family. It depends on Mg(2+) as a cofactor.

The catalysed reaction is dUTP + H2O = dUMP + diphosphate + H(+). The protein operates within pyrimidine metabolism; dUMP biosynthesis; dUMP from dCTP (dUTP route): step 2/2. Its function is as follows. This enzyme is involved in nucleotide metabolism: it produces dUMP, the immediate precursor of thymidine nucleotides and it decreases the intracellular concentration of dUTP so that uracil cannot be incorporated into DNA. This chain is Deoxyuridine 5'-triphosphate nucleotidohydrolase, found in Nocardia farcinica (strain IFM 10152).